Consider the following 1014-residue polypeptide: Klotho (1014 aa).

Residues 1 to 34 form the signal peptide; sequence MPARAPPRRLPRLLLLRLLSLHLLLLTLRARCLS. At 35-983 the chain is on the extracellular side; it reads AEPGQGAQTW…GCGFFQTRKS (949 aa). 2 glycosyl hydrolase-1 regions span residues 59–508 and 517–955; these read LHDT…NNGF and LEGT…NNGF. N-linked (GlcNAc...) asparagine glycosylation is found at Asn-161, Asn-285, Asn-346, Asn-609, Asn-614, and Asn-696. A helical membrane pass occupies residues 984-1004; the sequence is LLAFISFLVFAFVTSLALIYY. The Cytoplasmic segment spans residues 1005–1014; sequence YSKKGRRRYK.

Belongs to the glycosyl hydrolase 1 family. Klotho subfamily. As to quaternary structure, homodimer. Interacts with FGF23 and FGFR1. Post-translationally, N-glycosylated. As to expression, present in cortical renal tubules and the parathyroid (at protein level). Strongly expressed in kidney. Expressed at low levels in brain, lung, intestine and ovaries.

It is found in the cell membrane. The protein resides in the apical cell membrane. The protein localises to the secreted. The enzyme catalyses a beta-D-glucuronoside + H2O = D-glucuronate + an alcohol. May have weak glycosidase activity towards glucuronylated steroids. However, it lacks essential active site Glu residues at positions 241 and 874, suggesting it may be inactive as a glycosidase in vivo. May be involved in the regulation of calcium and phosphorus homeostasis by inhibiting the synthesis of active vitamin D. Essential factor for the specific interaction between FGF23 and FGFR1. Its function is as follows. The Klotho peptide generated by cleavage of the membrane-bound isoform may be an anti-aging circulating hormone which would extend life span by inhibiting insulin/IGF1 signaling. The polypeptide is Klotho (Kl) (Rattus norvegicus (Rat)).